Here is a 427-residue protein sequence, read N- to C-terminus: Sperm-associated antigen 1A (427 aa).

The segment at 46 to 113 (QKKGPGYREG…GPGSAGESCN (68 aa)) is disordered. 6 TPR repeats span residues 125–158 (LARLKNQGNMLFKNGQFGDALEKYTQAIDGCIEA), 167–200 (CVLYSNRAACFLKDGNSADCIQDCTRALELHPFS), 202–234 (KPLLRRAMAYESLERYRKAYVDYKTVLQIDISV), 302–335 (FTILKQEGNELVKNSQFQGASEKYSECLAIKPNE), 336–369 (CAIYTNRALCFLKLERFAEAKQDCDSALQMEPKN), and 371–403 (KAFYRRALAHKGLKDYLSASTDLQEVLQLDPNV).

It is found in the cytoplasm. It localises to the dynein axonemal particle. Its function is as follows. May play a role in the cytoplasmic assembly and/or trafficking of the axonemal dynein arms. This Danio rerio (Zebrafish) protein is Sperm-associated antigen 1A (spag1a).